Reading from the N-terminus, the 300-residue chain is Matrix protein (300 aa).

A disordered region spans residues 1-36 (MHMFPLGVVEDSDPPGPPIGRASGSPPPGAGRSTAK).

As to quaternary structure, homodimer. Dimerization is critical for virion formation. Interacts with host ANP32B.

The protein localises to the virion. Its subcellular location is the host cell membrane. Functionally, the M protein has a crucial role in virus assembly and interacts with the RNP complex as well as with the viral membrane. Associates with phosphatidylserine (PS) and phosphatidylinositol 4,5-bisphosphate (PIP2) at the plasma membrane. Interaction with PIP2 triggers matrix protein lattice polymerization. Matrix proteins induce host membrane deformation and curvature necessary for virion assembly/budding. In Measles virus (strain Yamagata-1) (MeV), this protein is Matrix protein (M).